A 104-amino-acid chain; its full sequence is uncharacterized protein (104 aa).

The segment at 1-24 is disordered; the sequence is MISTEKSSDAVAMHCPSGDQHNSE.

This is an uncharacterized protein from Saccharomyces cerevisiae (strain ATCC 204508 / S288c) (Baker's yeast).